Consider the following 244-residue polypeptide: MSFIVYPALDIRDGRVVRLRQGDYAQETSYGDDPLPRTQAFAAQGAQWMHLVDLDAARAGGYTLAPLLSSIRAQTTLQVQTGGGVRGRDDVARILDAGAGRVVVGSLAVRRPDEVVGWLEEFGAERITIALDARQDAQGQWQLPVHGWTENADVTLDDLARRYARAGMRHLLCTDIARDGMLAGPNISLYQHLSALLPGVAVQASGGIRDVADVAEARAAGCGGAILGKALLEQRMDLAEALAC.

The Proton acceptor role is filled by Asp-10. Asp-132 (proton donor) is an active-site residue.

It belongs to the HisA/HisF family.

The protein resides in the cytoplasm. The enzyme catalyses 1-(5-phospho-beta-D-ribosyl)-5-[(5-phospho-beta-D-ribosylamino)methylideneamino]imidazole-4-carboxamide = 5-[(5-phospho-1-deoxy-D-ribulos-1-ylimino)methylamino]-1-(5-phospho-beta-D-ribosyl)imidazole-4-carboxamide. The protein operates within amino-acid biosynthesis; L-histidine biosynthesis; L-histidine from 5-phospho-alpha-D-ribose 1-diphosphate: step 4/9. The protein is 1-(5-phosphoribosyl)-5-[(5-phosphoribosylamino)methylideneamino] imidazole-4-carboxamide isomerase of Stenotrophomonas maltophilia (strain R551-3).